The sequence spans 155 residues: Regulatory protein RecX (155 aa).

It belongs to the RecX family.

Its subcellular location is the cytoplasm. In terms of biological role, modulates RecA activity. This is Regulatory protein RecX from Pseudomonas entomophila (strain L48).